The following is a 155-amino-acid chain: Ribonuclease H (155 aa).

Residues 4–146 form the RNase H type-1 domain; it reads NIDVVEIYTD…CDRLATEQIK (143 aa). Mg(2+) is bound by residues Asp-13, Glu-51, Asp-73, and Asp-138.

It belongs to the RNase H family. In terms of assembly, monomer. Mg(2+) serves as cofactor.

It is found in the cytoplasm. The enzyme catalyses Endonucleolytic cleavage to 5'-phosphomonoester.. Its function is as follows. Endonuclease that specifically degrades the RNA of RNA-DNA hybrids. This chain is Ribonuclease H, found in Thermoanaerobacter pseudethanolicus (strain ATCC 33223 / 39E) (Clostridium thermohydrosulfuricum).